Consider the following 538-residue polypeptide: MMEAVAVAAAVLLLLHVAARVADAVWWRPRRLEAHFAGQGVRGPPYRFLVGCVREMVALMAEATAKPMPPAAPHNALPRVLAFYHYWRKIYGPTFLIWFGPTPRLTVAEPEMVREIFLTRAEAFDRYEAHPVVRQLEGDGLVSLHGDKWAHHRRVLTPGFYPDNLNRLVPHVGRSVAALAERWRAMACAGGGEVEVDVAEWFQAVAEEAITRATFGRSYDSGRVVFRLQARLMAFASEAFRKVLVPGYRFLPTKKNRMSWGLDREIRRGLVRLIGRRSGGDGGEEDETTTELKDKQDSGFNDLLGLMINAGVDRTMPVEDMVEECKTFFFAGKQTTTNLLTWATVLLAMHPDWQDRARREVLAVCGDAAGELPTKDHLPKLKTLGMILNETLRLYPPAVATIRRAKFDVTLGGGGDGDAGGIHIPRDTELLVPIMAIHHDARLWGPDAAQFNPARFASGAARAAKHPLAFIPFGLGSRMCIGQSLAILEAKLTMAVLLQRFDLALSPTYVHAPTVLMLLHPQYGAPLIFRPRQSQPSN.

Residues V5–W27 form a helical membrane-spanning segment. C480 serves as a coordination point for heme.

The protein belongs to the cytochrome P450 family. The cofactor is heme. In terms of tissue distribution, expressed in roots, shoot apex, leaf sheaths, leaf blades, internodes and panicles.

The protein localises to the membrane. Its function is as follows. Cytochrome P450 involved in brassinosteroids (BRs) inactivation and regulation of BRs homeostasis. Is a multifunctional and multisubstrate enzyme that controls the endogenous bioactive BR content both by direct inactivation of castasterone (CS) and by decreasing the levels of BR precursors. Catalyzes the oxidation of carbon 22 hydroxylated BR intermediates to produce C26 oxidized metabolites. This is Cytochrome P450 734A4 (CYP734A4) from Oryza sativa subsp. japonica (Rice).